We begin with the raw amino-acid sequence, 946 residues long: Phosphatidylinositol 4,5-bisphosphate 5-phosphatase INP51 (946 aa).

Positions 151–480 constitute an SAC domain; sequence LKKLFSDGTF…YYWLDRTYTK (330 aa). 2 disordered regions span residues 872-902 and 927-946; these read SDSI…SDLK and PKRD…FIER. Positions 936-946 are enriched in acidic residues; it reads ENEDEPLFIER.

The protein belongs to the synaptojanin family. It in the central section; belongs to the inositol 1,4,5-trisphosphate 5-phosphatase family. As to quaternary structure, interacts with IRS4 and TAX4.

The protein resides in the cytoplasm. It is found in the cytoskeleton. The protein localises to the actin patch. It catalyses the reaction a 1,2-diacyl-sn-glycero-3-phospho-(1D-myo-inositol-4,5-bisphosphate) + H2O = a 1,2-diacyl-sn-glycero-3-phospho-(1D-myo-inositol 4-phosphate) + phosphate. IRS4 and TAX4 are both positive regulator of INP51 activity and phosphatidylinositol 4,5-bisphosphate turnover. Functionally, controls the cellular levels and subcellular distribution of phosphatidylinositol 4,5-bisphosphate (PtdIns(4,5)P2). Does not utilize phosphatidylinositol 3,5-bisphosphate (PtdIns(3,5)P2), nor phosphatidylinositol 3-phosphate (PtdIns(3)P) and phosphatidylinositol 4-phosphate (PtdIns(4)P). Plays an essential role in a TGN (trans Golgi network)-to-early endosome pathway. Involved in endocytosis and acts as a negative regulator of the Slm pathway which modulates polarized actin assembly and growth. This chain is Phosphatidylinositol 4,5-bisphosphate 5-phosphatase INP51 (INP51), found in Saccharomyces cerevisiae (strain ATCC 204508 / S288c) (Baker's yeast).